Here is a 365-residue protein sequence, read N- to C-terminus: 3-isopropylmalate dehydrogenase (365 aa).

4 residues coordinate substrate: Arg96, Arg106, Arg134, and Asp224. 3 residues coordinate Mg(2+): Asp224, Asp248, and Asp252. Residue 288–300 coordinates NAD(+); the sequence is GSAPTIAKQNIAN.

It belongs to the isocitrate and isopropylmalate dehydrogenases family. LeuB type 1 subfamily. Homodimer. It depends on Mg(2+) as a cofactor. Mn(2+) is required as a cofactor.

It localises to the cytoplasm. It carries out the reaction (2R,3S)-3-isopropylmalate + NAD(+) = 4-methyl-2-oxopentanoate + CO2 + NADH. The protein operates within amino-acid biosynthesis; L-leucine biosynthesis; L-leucine from 3-methyl-2-oxobutanoate: step 3/4. Functionally, catalyzes the oxidation of 3-carboxy-2-hydroxy-4-methylpentanoate (3-isopropylmalate) to 3-carboxy-4-methyl-2-oxopentanoate. The product decarboxylates to 4-methyl-2 oxopentanoate. The polypeptide is 3-isopropylmalate dehydrogenase (Dehalococcoides mccartyi (strain CBDB1)).